A 93-amino-acid chain; its full sequence is Small ribosomal subunit protein uS19 (93 aa).

The protein belongs to the universal ribosomal protein uS19 family.

Functionally, protein S19 forms a complex with S13 that binds strongly to the 16S ribosomal RNA. This is Small ribosomal subunit protein uS19 from Symbiobacterium thermophilum (strain DSM 24528 / JCM 14929 / IAM 14863 / T).